Here is a 168-residue protein sequence, read N- to C-terminus: Phosphopantetheine adenylyltransferase (168 aa).

Position 13 (threonine 13) interacts with substrate. ATP contacts are provided by residues 13–14 (TF) and histidine 21. Substrate contacts are provided by lysine 45, leucine 78, and arginine 92. Residues 93–95 (GLR), glutamate 103, and 128–134 (TQFISSS) each bind ATP.

The protein belongs to the bacterial CoaD family. Homohexamer. Requires Mg(2+) as cofactor.

It localises to the cytoplasm. The catalysed reaction is (R)-4'-phosphopantetheine + ATP + H(+) = 3'-dephospho-CoA + diphosphate. It participates in cofactor biosynthesis; coenzyme A biosynthesis; CoA from (R)-pantothenate: step 4/5. In terms of biological role, reversibly transfers an adenylyl group from ATP to 4'-phosphopantetheine, yielding dephospho-CoA (dPCoA) and pyrophosphate. This Wolbachia pipientis subsp. Culex pipiens (strain wPip) protein is Phosphopantetheine adenylyltransferase.